The chain runs to 660 residues: Transcription activator of gluconeogenesis CHGG_09150 (660 aa).

A compositionally biased stretch (acidic residues) spans 1–12 (MSDSENEYDETD). The interval 1 to 52 (MSDSENEYDETDQLVKEEDEKMSDQRLTSEGADTSAEPKKKYDPKDPLRPRR) is disordered. Basic and acidic residues-rich tracts occupy residues 13-24 (QLVKEEDEKMSD) and 36-49 (AEPKKKYDPKDPLR). The segment at residues 59 to 87 (CFACQRAHLTCGDERPCQRCIKRNLMESC) is a DNA-binding region (zn(2)-C6 fungal-type). Disordered stretches follow at residues 98 to 144 (LHDA…TFFS), 170 to 191 (FANQQSPTSPSFQTSGNPQISG), and 319 to 368 (PTSI…RQSN). Positions 129-144 (SIQTSEASSNQGTFFS) are enriched in polar residues. The span at 173–184 (QQSPTSPSFQTS) shows a compositional bias: low complexity. 2 stretches are compositionally biased toward polar residues: residues 320–332 (TSIQSPSTDTNSP) and 344–368 (TMATFSTTPGSKPANQQRPSTRQSN). Residues 455–526 (SLLEYEEFMH…NSKARVGLAT (72 aa)) enclose the PAS domain. The tract at residues 587–613 (APDKDDGTGESSTDGQLPQKDPRNSIL) is disordered.

The protein belongs to the ERT1/acuK family.

It localises to the nucleus. Its function is as follows. Transcription factor which regulates nonfermentable carbon utilization. Activator of gluconeogenetic genes. The protein is Transcription activator of gluconeogenesis CHGG_09150 of Chaetomium globosum (strain ATCC 6205 / CBS 148.51 / DSM 1962 / NBRC 6347 / NRRL 1970) (Soil fungus).